The primary structure comprises 98 residues: NADH-ubiquinone oxidoreductase chain 4L (98 aa).

Transmembrane regions (helical) follow at residues 1–21 (MPPI…GMLV), 29–49 (SLLC…TMAL), and 61–81 (IVLL…LVMV).

Belongs to the complex I subunit 4L family. Core subunit of respiratory chain NADH dehydrogenase (Complex I) which is composed of 45 different subunits.

The protein resides in the mitochondrion inner membrane. The catalysed reaction is a ubiquinone + NADH + 5 H(+)(in) = a ubiquinol + NAD(+) + 4 H(+)(out). Functionally, core subunit of the mitochondrial membrane respiratory chain NADH dehydrogenase (Complex I) which catalyzes electron transfer from NADH through the respiratory chain, using ubiquinone as an electron acceptor. Part of the enzyme membrane arm which is embedded in the lipid bilayer and involved in proton translocation. The polypeptide is NADH-ubiquinone oxidoreductase chain 4L (MT-ND4L) (Orycteropus afer (Aardvark)).